The following is a 450-amino-acid chain: Exodeoxyribonuclease 7 large subunit (450 aa).

This sequence belongs to the XseA family. Heterooligomer composed of large and small subunits.

Its subcellular location is the cytoplasm. It catalyses the reaction Exonucleolytic cleavage in either 5'- to 3'- or 3'- to 5'-direction to yield nucleoside 5'-phosphates.. Functionally, bidirectionally degrades single-stranded DNA into large acid-insoluble oligonucleotides, which are then degraded further into small acid-soluble oligonucleotides. The sequence is that of Exodeoxyribonuclease 7 large subunit from Listeria innocua serovar 6a (strain ATCC BAA-680 / CLIP 11262).